Reading from the N-terminus, the 526-residue chain is MIRTALLSVSDKNGIVPFAKSLHEQGIKLISTGGTAKLLAENGLPVVEISSLTKFPEMLDGRVKTLHPMVHGGLLARRDFPEHMAALKEYGINTIDMLVINLYPFNETVAKENCSFEDAVENIDIGGPAMLRAAAKNHQDVTVLISPEDYAPVLAEMKANQNSVSYKTNLALAKKVFAHTAQYDGAIANYLSALGDDLDHKARSAYPETLHLAFEKVQEMRYGENPHQAAAFYKDIYPVDGALANYKQLQGKELSYNNIADADSAWECVKSFTGNAGGAAACVIIKHANPCGVAVGASALEAYQKAFKTDPSSAFGGIIAFNVSCDGAAAEAISKQFVEVLIAPSFSDEAKTIFAAKQNMRLLEIPLGTAFNTFDFKRVGGGLLVQSPDAKNVLENEMCVVSKRLPTPSEMHDMMFAWRVAKFVKSNAIIYCANGMTLGIGAGQMSRVDSARMASIKAKNAGLSLKGSAVASDAFFPFRDGLDVVVNGGASCAIQPGGSMRDDEIIAAADEHGIAMIFTGTRHFRH.

One can recognise an MGS-like domain in the interval 1–145 (MIRTALLSVS…KNHQDVTVLI (145 aa)).

This sequence belongs to the PurH family.

It carries out the reaction (6R)-10-formyltetrahydrofolate + 5-amino-1-(5-phospho-beta-D-ribosyl)imidazole-4-carboxamide = 5-formamido-1-(5-phospho-D-ribosyl)imidazole-4-carboxamide + (6S)-5,6,7,8-tetrahydrofolate. The catalysed reaction is IMP + H2O = 5-formamido-1-(5-phospho-D-ribosyl)imidazole-4-carboxamide. It participates in purine metabolism; IMP biosynthesis via de novo pathway; 5-formamido-1-(5-phospho-D-ribosyl)imidazole-4-carboxamide from 5-amino-1-(5-phospho-D-ribosyl)imidazole-4-carboxamide (10-formyl THF route): step 1/1. The protein operates within purine metabolism; IMP biosynthesis via de novo pathway; IMP from 5-formamido-1-(5-phospho-D-ribosyl)imidazole-4-carboxamide: step 1/1. This Polynucleobacter necessarius subsp. necessarius (strain STIR1) protein is Bifunctional purine biosynthesis protein PurH.